We begin with the raw amino-acid sequence, 118 residues long: Large ribosomal subunit protein uL18 (118 aa).

The interval 1-26 is disordered; it reads MISKPDKNKIRQKRHRRVRGKLSGTA. Over residues 10–20 the composition is skewed to basic residues; that stretch reads IRQKRHRRVRG.

It belongs to the universal ribosomal protein uL18 family. As to quaternary structure, part of the 50S ribosomal subunit; part of the 5S rRNA/L5/L18/L25 subcomplex. Contacts the 5S and 23S rRNAs.

Its function is as follows. This is one of the proteins that bind and probably mediate the attachment of the 5S RNA into the large ribosomal subunit, where it forms part of the central protuberance. The protein is Large ribosomal subunit protein uL18 of Streptococcus equi subsp. zooepidemicus (strain H70).